The chain runs to 345 residues: Dihydroorotase (345 aa).

Positions 13 and 15 each coordinate Zn(2+). Substrate contacts are provided by residues 15–17 (HFR) and Asn41. Zn(2+) is bound by residues Lys98, His135, and His173. Lys98 bears the N6-carboxylysine mark. His135 lines the substrate pocket. Leu218 contacts substrate. Residue Asp246 participates in Zn(2+) binding. Residue Asp246 is part of the active site. The substrate site is built by His250 and Ala262.

This sequence belongs to the metallo-dependent hydrolases superfamily. DHOase family. Class II DHOase subfamily. Homodimer. Zn(2+) is required as a cofactor.

The enzyme catalyses (S)-dihydroorotate + H2O = N-carbamoyl-L-aspartate + H(+). The protein operates within pyrimidine metabolism; UMP biosynthesis via de novo pathway; (S)-dihydroorotate from bicarbonate: step 3/3. In terms of biological role, catalyzes the reversible cyclization of carbamoyl aspartate to dihydroorotate. In Shewanella pealeana (strain ATCC 700345 / ANG-SQ1), this protein is Dihydroorotase.